Consider the following 357-residue polypeptide: Arginine kinase Scy p 2.0101 (357 aa).

Residues 9–91 (KLEEGFKKLE…FDPIIEDYHK (83 aa)) enclose the Phosphagen kinase N-terminal domain. Residue 64–68 (GVGVY) coordinates L-arginine. IgE-binding and beta-hexosaminidase release from rat basophilic leukemia (RBL) cells stretches follow at residues 113–127 (VDPDGKFVISTRVRC) and 127–155 (CGRSMEGYPFNPCLTEAQYKEMESKVSST). The region spanning 119–356 (FVISTRVRCG…LELIKIEKEM (238 aa)) is the Phosphagen kinase C-terminal domain. 122-126 (STRVR) contributes to the ATP binding site. Position 185 (His185) interacts with ATP. Cys201 and Cys271 form a disulfide bridge. Positions 204 to 218 (WPTGRGIYHNDNKTF) are igE-binding and beta-hexosaminidase release from rat basophilic leukemia (RBL) cells. The igE-binding, but no beta-hexosaminidase release from rat basophilic leukemia (RBL) cells stretch occupies residues 211–225 (YHNDNKTFLVWCNEE). Glu225 is an L-arginine binding site. Residue Arg229 coordinates ATP. Cys271 is a binding site for L-arginine. ATP is bound by residues 280–284 (RASVH) and 309–314 (RGTRGE). Glu314 contacts L-arginine. Positions 316–330 (TEAEGGVYDISNKRR) are igE-binding, but no beta-hexosaminidase release from rat basophilic leukemia (RBL) cells.

This sequence belongs to the ATP:guanido phosphotransferase family. In terms of processing, glycosylated. In terms of tissue distribution, muscle (at protein level).

The catalysed reaction is L-arginine + ATP = N(omega)-phospho-L-arginine + ADP + H(+). Its function is as follows. Catalyzes the reversible transfer of high energy ATP gamma-phosphate group to L-arginine. This is Arginine kinase Scy p 2.0101 from Scylla paramamosain (Mud crab).